Consider the following 859-residue polypeptide: Protein translocase subunit SecA (859 aa).

ATP-binding positions include Gln-88, 106 to 110 (GEGKT), and Asp-496. Residues 818–838 (FSHQPQSEVKVSRNDPCPCGS) are disordered. Residues Cys-834, Cys-836, Cys-845, and Cys-846 each coordinate Zn(2+).

The protein belongs to the SecA family. Monomer and homodimer. Part of the essential Sec protein translocation apparatus which comprises SecA, SecYEG and auxiliary proteins SecDF-YajC and YidC. The cofactor is Zn(2+).

It localises to the cell inner membrane. The protein resides in the cytoplasm. The catalysed reaction is ATP + H2O + cellular proteinSide 1 = ADP + phosphate + cellular proteinSide 2.. In terms of biological role, part of the Sec protein translocase complex. Interacts with the SecYEG preprotein conducting channel. Has a central role in coupling the hydrolysis of ATP to the transfer of proteins into and across the cell membrane, serving as an ATP-driven molecular motor driving the stepwise translocation of polypeptide chains across the membrane. In Wolinella succinogenes (strain ATCC 29543 / DSM 1740 / CCUG 13145 / JCM 31913 / LMG 7466 / NCTC 11488 / FDC 602W) (Vibrio succinogenes), this protein is Protein translocase subunit SecA.